Here is a 186-residue protein sequence, read N- to C-terminus: Translation initiation factor IF-3 (186 aa).

This sequence belongs to the IF-3 family. In terms of assembly, monomer.

Its subcellular location is the cytoplasm. Its function is as follows. IF-3 binds to the 30S ribosomal subunit and shifts the equilibrium between 70S ribosomes and their 50S and 30S subunits in favor of the free subunits, thus enhancing the availability of 30S subunits on which protein synthesis initiation begins. In Chlamydia muridarum (strain MoPn / Nigg), this protein is Translation initiation factor IF-3.